A 208-amino-acid polypeptide reads, in one-letter code: MARYLGPKLKLSRREGTDLFLKSGVRAIESKCRNRLDVAPGQHGARKPRLSDYGSQLREKQKVRRIYGILERQFRNYYTEANRLKGNTGENLLVLLEGRLDNVVYRMGFAATRAEARQLVSHKSIVVNGRVVNIPSYQVSVDDVVAVREKSKKQARIKASLELATQREKPTWLEVDATKMEGVFKRTPERSDLSADINEHLIVELYSK.

One can recognise an S4 RNA-binding domain in the interval 98–158; that stretch reads GRLDNVVYRM…EKSKKQARIK (61 aa).

This sequence belongs to the universal ribosomal protein uS4 family. In terms of assembly, part of the 30S ribosomal subunit. Contacts protein S5. The interaction surface between S4 and S5 is involved in control of translational fidelity.

One of the primary rRNA binding proteins, it binds directly to 16S rRNA where it nucleates assembly of the body of the 30S subunit. Its function is as follows. With S5 and S12 plays an important role in translational accuracy. The protein is Small ribosomal subunit protein uS4 of Actinobacillus pleuropneumoniae serotype 5b (strain L20).